The primary structure comprises 151 residues: UPF0208 membrane protein SG1605 (151 aa).

A run of 2 helical transmembrane segments spans residues 46–64 and 70–90; these read FGVRFMPAVAVFTLTWQIA and GPAVATAIFACSLPMQGLWWL.

It belongs to the UPF0208 family.

Its subcellular location is the cell inner membrane. This chain is UPF0208 membrane protein SG1605, found in Sodalis glossinidius (strain morsitans).